A 392-amino-acid polypeptide reads, in one-letter code: D-amino-acid oxidase 2 (392 aa).

Ser10, Ile13, Arg33, Asp34, Ala45, Ser46, Gly50, and Asn52 together coordinate FAD. Residues Phe56, Tyr245, Tyr262, and Arg311 each coordinate anthranilate. (R)-lactate contacts are provided by Tyr245, Tyr262, and Arg311. FAD contacts are provided by Arg311, Gly361, Ser362, Gly364, and Gln366. An anthranilate-binding site is contributed by Ser362. Position 362 (Ser362) interacts with (R)-lactate. The Microbody targeting signal signature appears at 390–392 (AKL).

The protein belongs to the DAMOX/DASOX family. The cofactor is FAD.

Its subcellular location is the peroxisome matrix. The catalysed reaction is a D-alpha-amino acid + O2 + H2O = a 2-oxocarboxylate + H2O2 + NH4(+). The enzyme catalyses D-methionine + O2 + H2O = 4-methylsulfanyl-2-oxobutanoate + H2O2 + NH4(+). It catalyses the reaction D-serine + O2 + H2O = 3-hydroxypyruvate + H2O2 + NH4(+). It carries out the reaction D-histidine + O2 + H2O = 3-(imidazol-5-yl)pyruvate + H2O2 + NH4(+). The catalysed reaction is D-proline + O2 = 1-pyrroline-2-carboxylate + H2O2. The enzyme catalyses D-alanine + O2 + H2O = pyruvate + H2O2 + NH4(+). It catalyses the reaction D-leucine + O2 + H2O = 4-methyl-2-oxopentanoate + H2O2 + NH4(+). It carries out the reaction D-valine + O2 + H2O = 3-methyl-2-oxobutanoate + H2O2 + NH4(+). Its function is as follows. Catalyzes the oxidative deamination of D-amino acids with broad substrate specificity. Enables the organism to utilize D-amino acids as a source of nutrients. Enables the organism to utilize D-alanine, D-cysteine, D-histidine, D-leucine, D-methionine, D-phenylalanine, D-proline, D-serine, D-threonine, D-aspartate and D-valine as a nitrogen source and may also contribute to utlization of D-tryptophan, D-tyrosine and D-asparagine as a nitrogen source. Protects the organism from the toxicity of D-amino acids, including from D-alanine. May play a role in its interaction with the host. The sequence is that of D-amino-acid oxidase 2 from Cryptococcus deuterogattii (strain R265) (Cryptococcus gattii VGII (strain R265)).